Here is a 542-residue protein sequence, read N- to C-terminus: NXPE family member 4 (542 aa).

The signal sequence occupies residues 1–26 (MKMMASRKSLWVLLFIVIFWISFTVF). N-linked (GlcNAc...) asparagine glycans are attached at residues Asn91, Asn92, Asn159, and Asn223.

The protein belongs to the NXPE family.

Its subcellular location is the secreted. This is NXPE family member 4 (Nxpe4) from Rattus norvegicus (Rat).